A 504-amino-acid chain; its full sequence is Maturase K (504 aa).

The protein belongs to the intron maturase 2 family. MatK subfamily.

The protein localises to the plastid. It localises to the chloroplast. Functionally, usually encoded in the trnK tRNA gene intron. Probably assists in splicing its own and other chloroplast group II introns. In Olimarabidopsis pumila (Dwarf rocket), this protein is Maturase K.